The following is a 223-amino-acid chain: Ribosomal RNA small subunit methyltransferase G (223 aa).

Residues Gly82, Leu87, 133–134, and Arg151 contribute to the S-adenosyl-L-methionine site; that span reads AE.

Belongs to the methyltransferase superfamily. RNA methyltransferase RsmG family.

Its subcellular location is the cytoplasm. Functionally, specifically methylates the N7 position of guanine in position 518 of 16S rRNA. In Corynebacterium glutamicum (strain R), this protein is Ribosomal RNA small subunit methyltransferase G.